A 1225-amino-acid chain; its full sequence is DNA-directed RNA polymerase subunit beta' (1225 aa).

The Zn(2+) site is built by Cys-60, Cys-62, Cys-75, and Cys-78. 3 residues coordinate Mg(2+): Asp-450, Asp-452, and Asp-454. 4 residues coordinate Zn(2+): Cys-818, Cys-892, Cys-899, and Cys-902.

Belongs to the RNA polymerase beta' chain family. As to quaternary structure, the RNAP catalytic core consists of 2 alpha, 1 beta, 1 beta' and 1 omega subunit. When a sigma factor is associated with the core the holoenzyme is formed, which can initiate transcription. The cofactor is Mg(2+). Zn(2+) is required as a cofactor.

It carries out the reaction RNA(n) + a ribonucleoside 5'-triphosphate = RNA(n+1) + diphosphate. DNA-dependent RNA polymerase catalyzes the transcription of DNA into RNA using the four ribonucleoside triphosphates as substrates. The protein is DNA-directed RNA polymerase subunit beta' of Streptococcus pneumoniae serotype 19F (strain G54).